Here is a 297-residue protein sequence, read N- to C-terminus: MKYSIKAPAKINLSLDVIRKREDGYHEVEMIMTMVDLADRVDLSLRADGGISIDVSEGFVPSDERNFAYQAASLLKKRYNVREGVHIYITKRIPVAAGLAGGSSDAAATLKGLNELWQLGLSVDELATLGAEIGSDVSFCVYGGTALATGRGELIKPIASPPPLWVILAKPPIGLSTADVYNGLKLSEARHAKTAEMIAALERQDAASICALLHNTLEDVTLRLYPEVAHIKEQMKRFGANGVLMSGSGPTVFGIVEKESRVNRIYNGLRGFCDEVYAVRLIRTSGTCPNTDENGML.

Lysine 10 is an active-site residue. An ATP-binding site is contributed by 94-104; it reads PVAAGLAGGSS. The active site involves aspartate 136.

It belongs to the GHMP kinase family. IspE subfamily.

It carries out the reaction 4-CDP-2-C-methyl-D-erythritol + ATP = 4-CDP-2-C-methyl-D-erythritol 2-phosphate + ADP + H(+). Its pathway is isoprenoid biosynthesis; isopentenyl diphosphate biosynthesis via DXP pathway; isopentenyl diphosphate from 1-deoxy-D-xylulose 5-phosphate: step 3/6. Its function is as follows. Catalyzes the phosphorylation of the position 2 hydroxy group of 4-diphosphocytidyl-2C-methyl-D-erythritol. The polypeptide is 4-diphosphocytidyl-2-C-methyl-D-erythritol kinase (Shouchella clausii (strain KSM-K16) (Alkalihalobacillus clausii)).